We begin with the raw amino-acid sequence, 188 residues long: CASP-like protein 4B1 (188 aa).

The span at 1–11 shows a compositional bias: basic and acidic residues; the sequence is MTNPDKQKPVE. The interval 1 to 34 is disordered; sequence MTNPDKQKPVEVTDVETAAEKTSEPTPASGTSTI. Residues 1–46 lie on the Cytoplasmic side of the membrane; that stretch reads MTNPDKQKPVEVTDVETAAEKTSEPTPASGTSTITQRWKREDLIKK. The span at 24 to 34 shows a compositional bias: polar residues; sequence EPTPASGTSTI. A helical transmembrane segment spans residues 47-67; that stretch reads ASPITRGICLLFSLLAFLIMV. The Extracellular portion of the chain corresponds to 68 to 84; it reads SNKHGYGRNFNEYEEYR. Residues 85–105 form a helical membrane-spanning segment; that stretch reads YVLAISIISTLYTAWQTFAHF. The Cytoplasmic portion of the chain corresponds to 106–120; sequence SKREFFDRRTSTLVD. Residues 121–141 form a helical membrane-spanning segment; sequence FSGDQIVAYLLISAASSAIPL. The Extracellular portion of the chain corresponds to 142 to 156; it reads TNRFREGQDNIFTDS. A helical membrane pass occupies residues 157–177; it reads AASAISMAIFAFVALALSALF. Residues 178–188 lie on the Cytoplasmic side of the membrane; sequence SGYKLSTHSFI.

This sequence belongs to the Casparian strip membrane proteins (CASP) family. Homodimer and heterodimers.

The protein resides in the cell membrane. In Arabidopsis lyrata subsp. lyrata (Lyre-leaved rock-cress), this protein is CASP-like protein 4B1.